The sequence spans 148 residues: MDTPNKDDSIIRFSVSLQQNLLDELDNRIIKNGYSSRSELVRDMIREKLVEDNWAEDNPNDESKIAVLVVIYDHHQRELNQRMIDIQHASGTHVLCTTHIHMDEHNCLETIILQGNSFEIQRLQLEIGGLRGVKFAKLTKASSFEYNE.

Positions 88, 99, 101, and 107 each coordinate Ni(2+).

This sequence belongs to the transcriptional regulatory CopG/NikR family. Homotetramer. Ni(2+) serves as cofactor.

Transcriptional regulator. The chain is Putative nickel-responsive regulator from Helicobacter pylori (strain ATCC 700392 / 26695) (Campylobacter pylori).